We begin with the raw amino-acid sequence, 189 residues long: Protein jagunal homolog (189 aa).

The Cytoplasmic segment spans residues 1-34 (MSSRGVRAAGTDGNDFQNRQRIAQHYQESAQYKS). Residues 35–55 (VLKWFFVPHFLILVFMWLKVG) traverse the membrane as a helical segment. Topologically, residues 56–75 (SEFLRYNFGWKNAFFERLDM) are lumenal. The chain crosses the membrane as a helical span at residues 76 to 96 (PAAYPWEYVWCLSFIPIVLAL). Residues 97 to 105 (SSFQRNKLK) are Cytoplasmic-facing. A helical membrane pass occupies residues 106-126 (VLHYAYYAEFICGIFPCMIGL). At 127–150 (GGQLPELLEYANDMEGSNTPTFKG) the chain is on the lumenal side. The helical transmembrane segment at 151-171 (IFPMVIIWYIFFAVALQIHGF) threads the bilayer. Topologically, residues 172–189 (SMYFMHHLAAAWAPVKRD) are cytoplasmic.

This sequence belongs to the jagunal family.

Its subcellular location is the endoplasmic reticulum membrane. This chain is Protein jagunal homolog, found in Caenorhabditis briggsae.